A 1137-amino-acid polypeptide reads, in one-letter code: Phytochrome C (1137 aa).

Residues 1-18 (MSSSRSNNRATCSRSSSA) are compositionally biased toward low complexity. Residues 1–27 (MSSSRSNNRATCSRSSSARSKHSARVV) form a disordered region. A GAF domain is found at 217–400 (NLSLLCDVLV…VFGIQINKEV (184 aa)). Residue Cys-322 participates in phytochromobilin binding. PAS domains lie at 620–690 (VTNE…LQGI) and 750–824 (IQGD…TKLS). Positions 904–1124 (YIRQELRNPL…IVLVEFPVAQ (221 aa)) constitute a Histidine kinase domain.

This sequence belongs to the phytochrome family. Homodimer. In terms of processing, contains one covalently linked phytochromobilin chromophore.

In terms of biological role, regulatory photoreceptor which exists in two forms that are reversibly interconvertible by light: the Pr form that absorbs maximally in the red region of the spectrum and the Pfr form that absorbs maximally in the far-red region. Photoconversion of Pr to Pfr induces an array of morphogenic responses, whereas reconversion of Pfr to Pr cancels the induction of those responses. Pfr controls the expression of a number of nuclear genes including those encoding the small subunit of ribulose-bisphosphate carboxylase, chlorophyll A/B binding protein, protochlorophyllide reductase, rRNA, etc. It also controls the expression of its own gene(s) in a negative feedback fashion. The protein is Phytochrome C (PHYC) of Oryza sativa subsp. japonica (Rice).